The following is a 1147-amino-acid chain: Tip elongation aberrant protein 1 (1147 aa).

Residues 1-16 are compositionally biased toward basic residues; sequence MSFLFKRNKGSAHKPT. The disordered stretch occupies residues 1–64; the sequence is MSFLFKRNKG…TGSGSHITAS (64 aa). Polar residues predominate over residues 18–32; it reads PNFSKTSTTPSTSQL. Kelch repeat units follow at residues 94–144, 146–198, 199–253, 254–303, 305–351, and 355–402; these read EIYI…LIGN, FIVF…CLGS, KICL…TFSD, KLYI…VVEG, LYVF…TLSC, and TLVL…SNST. Disordered stretches follow at residues 384-403 and 408-547; these read SVPT…NSTG and SAFN…NAQS. 3 stretches are compositionally biased toward polar residues: residues 385-403, 408-465, and 472-489; these read VPTT…NSTG, SAFN…SNDL, and TRSN…LNSH. The span at 502 to 512 shows a compositional bias: low complexity; sequence SSLNSQQLSNQ. Ser-503 is subject to Phosphoserine. Polar residues predominate over residues 519-547; sequence VSPTLSFVPSSHSMEQGNGSVASANNAQS. Residues 538-1147 are interaction with tea4; sequence SVASANNAQS…AKEPVHDNEN (610 aa). Coiled coils occupy residues 611–649, 716–838, 879–990, and 1084–1105; these read KLYE…LEKV, QTSS…IIDA, KNNE…ALEE, and IKSL…AKEK. The segment at 948-1147 is retention at microtubule cell ends; sequence KALEQRNTGA…AKEPVHDNEN (200 aa).

As to quaternary structure, major component of the tea1 cell-end complex. Interacts with rax2, tea4 and tip1. Interacts with for3 in the presence of tea4.

It localises to the cytoplasm. The protein resides in the cytoskeleton. Functionally, cell polarity protein. Acts as an end marker, directing the growth machinery to the cell poles. Involved in the regulation of microtubular organization, affecting the maintenance of a single central axis. Prevents the curling of microtubule tips around the cell ends and is required for the retention of polarity factors such as pom1, tip1 and tea2 at the cell ends, necessary for the cell to grow in a straight line. Links tip1 and tea4 in a common complex. In Schizosaccharomyces pombe (strain 972 / ATCC 24843) (Fission yeast), this protein is Tip elongation aberrant protein 1 (tea1).